The following is a 337-amino-acid chain: Inositol 2-dehydrogenase (337 aa).

It belongs to the Gfo/Idh/MocA family. In terms of assembly, homotetramer.

It carries out the reaction myo-inositol + NAD(+) = scyllo-inosose + NADH + H(+). Functionally, involved in the oxidation of myo-inositol (MI) to 2-keto-myo-inositol (2KMI or 2-inosose). This Gluconacetobacter diazotrophicus (strain ATCC 49037 / DSM 5601 / CCUG 37298 / CIP 103539 / LMG 7603 / PAl5) protein is Inositol 2-dehydrogenase.